The chain runs to 758 residues: 5-methyltetrahydropteroyltriglutamate--homocysteine methyltransferase (758 aa).

5-methyltetrahydropteroyltri-L-glutamate contacts are provided by residues 17-20 (RELK) and K113. Residues 433 to 435 (IGS) and E486 contribute to the L-homocysteine site. L-methionine contacts are provided by residues 433–435 (IGS) and E486. 5-methyltetrahydropteroyltri-L-glutamate-binding positions include 517-518 (RC) and W563. D601 is a binding site for L-homocysteine. An L-methionine-binding site is contributed by D601. E607 provides a ligand contact to 5-methyltetrahydropteroyltri-L-glutamate. Residues H643, C645, and E667 each coordinate Zn(2+). The active-site Proton donor is the H696. Zn(2+) is bound at residue C728.

This sequence belongs to the vitamin-B12 independent methionine synthase family. Zn(2+) serves as cofactor.

The enzyme catalyses 5-methyltetrahydropteroyltri-L-glutamate + L-homocysteine = tetrahydropteroyltri-L-glutamate + L-methionine. It functions in the pathway amino-acid biosynthesis; L-methionine biosynthesis via de novo pathway; L-methionine from L-homocysteine (MetE route): step 1/1. Functionally, catalyzes the transfer of a methyl group from 5-methyltetrahydrofolate to homocysteine resulting in methionine formation. This is 5-methyltetrahydropteroyltriglutamate--homocysteine methyltransferase from Nitrosomonas europaea (strain ATCC 19718 / CIP 103999 / KCTC 2705 / NBRC 14298).